A 142-amino-acid chain; its full sequence is ATP synthase epsilon chain (142 aa).

This sequence belongs to the ATPase epsilon chain family. F-type ATPases have 2 components, CF(1) - the catalytic core - and CF(0) - the membrane proton channel. CF(1) has five subunits: alpha(3), beta(3), gamma(1), delta(1), epsilon(1). CF(0) has three main subunits: a, b and c.

It localises to the cell inner membrane. Its function is as follows. Produces ATP from ADP in the presence of a proton gradient across the membrane. The protein is ATP synthase epsilon chain of Shewanella loihica (strain ATCC BAA-1088 / PV-4).